A 1067-amino-acid chain; its full sequence is Probable importin subunit beta-4 (1067 aa).

Residues 27 to 94 (ATRALETKYL…RSNLLDITLK (68 aa)) form the Importin N-terminal domain. 6 HEAT repeats span residues 159–196 (KLLLDFVNLFSQTITDSSRTVRVTSVQGLGAIAEVLES), 379–416 (GNLPNIFPIIINGLCDNDMDVRQAALLALSQIAVEIPT), 420–457 (KHHAQLLPLVFELMSTQGVKVGKSACNCIDALLEGLDK), 591–633 (PFLE…SVET), 890–927 (PFTRDVFSLFMAALEDSEGEVRSNAAYSMGLLCQFSTE), and 1013–1050 (QHLGELIPVFASVLTGSPEQLNDELRSELLSMVKEIAP).

This sequence belongs to the importin beta family.

The protein localises to the cytoplasm. Its subcellular location is the nucleus. The protein resides in the nucleus envelope. In terms of biological role, required for nuclear protein import, its predominant substrate seems to be ribosomal proteins. Binds to nucleoporins and the GTP-bound form of gsp1 (Ran). This is Probable importin subunit beta-4 (kap123) from Schizosaccharomyces pombe (strain 972 / ATCC 24843) (Fission yeast).